Here is a 333-residue protein sequence, read N- to C-terminus: Mitochondrial fission regulator 1 (333 aa).

The transit peptide at M1–Q48 directs the protein to the mitochondrion. A Phosphoserine modification is found at S119. Residues N137–N169 adopt a coiled-coil conformation. Disordered regions lie at residues S177 to A198 and S288 to H315. The segment at T179–E304 is necessary and sufficient to promote mitochondrial fission. Residues P184–A198 show a composition bias toward pro residues. The span at S288–S307 shows a compositional bias: basic and acidic residues.

It belongs to the MTFR1 family.

The protein resides in the mitochondrion. Functionally, may play a role in mitochondrial aerobic respiration. May also regulate mitochondrial organization and fission. This Homo sapiens (Human) protein is Mitochondrial fission regulator 1 (MTFR1).